The chain runs to 110 residues: UPF0060 membrane protein RPA3838 (110 aa).

4 helical membrane-spanning segments follow: residues 4-24 (LLTF…FWAW), 31-51 (PLWL…LTLA), 59-79 (AYAA…WAIE), and 85-105 (QWDV…LFGP).

It belongs to the UPF0060 family.

It is found in the cell inner membrane. The sequence is that of UPF0060 membrane protein RPA3838 from Rhodopseudomonas palustris (strain ATCC BAA-98 / CGA009).